The chain runs to 463 residues: Fumarate hydratase class II (463 aa).

Substrate contacts are provided by residues 97–99 (SGT), 128–131 (HPND), 138–140 (SSN), and Thr186. The active-site Proton donor/acceptor is the His187. Ser317 is an active-site residue. Residues Ser318 and 323–325 (KVN) contribute to the substrate site.

It belongs to the class-II fumarase/aspartase family. Fumarase subfamily. As to quaternary structure, homotetramer.

Its subcellular location is the cytoplasm. It carries out the reaction (S)-malate = fumarate + H2O. Its pathway is carbohydrate metabolism; tricarboxylic acid cycle; (S)-malate from fumarate: step 1/1. Involved in the TCA cycle. Catalyzes the stereospecific interconversion of fumarate to L-malate. The polypeptide is Fumarate hydratase class II (Helicobacter pylori (strain J99 / ATCC 700824) (Campylobacter pylori J99)).